A 257-amino-acid polypeptide reads, in one-letter code: Hydroxyacylglutathione hydrolase (257 aa).

Positions 58, 60, 62, 63, 116, 135, and 173 each coordinate Zn(2+).

It belongs to the metallo-beta-lactamase superfamily. Glyoxalase II family. As to quaternary structure, monomer. Requires Zn(2+) as cofactor.

The enzyme catalyses an S-(2-hydroxyacyl)glutathione + H2O = a 2-hydroxy carboxylate + glutathione + H(+). It functions in the pathway secondary metabolite metabolism; methylglyoxal degradation; (R)-lactate from methylglyoxal: step 2/2. In terms of biological role, thiolesterase that catalyzes the hydrolysis of S-D-lactoyl-glutathione to form glutathione and D-lactic acid. This is Hydroxyacylglutathione hydrolase from Brucella melitensis biotype 1 (strain ATCC 23456 / CCUG 17765 / NCTC 10094 / 16M).